The sequence spans 504 residues: MNLYISILILIISLIIFFKNNNRISKINSKIPGPIRLPIFGNLLQINKDPHIQFQKWYEKYGVIYSIRLGNIETVVFTGYPIFKKAFIENSQIFAPRFQHLSRFEANGCKNLIGSNDEIHSTLKKLILTEITSNKIKKMENHIVLECENLCKQLDKHCQDGLPFSLNMYFKLFSLNIILRFLFGTINNSYQDKSNQDIVDVIIEFLHYGGNPIMSDFIPILKPFYKQNKFFKFYPILCDHLNKLIENYKNNKQLQKQQKQQQNEDDDDDDDGTIIGKLLKEYHNGKISWTSVVSTCVDVFLAGVDSTSNSTIFTLIALVNNSNCQEKLFNEIKNNLKKSDDGHDEIVIRHSLYRSSIPYLSLVMKEVYRLYSVILIGLPHITSEDVEIEGYKIAKGTQIIQNVFSTHLCEKTFPMSKSFIPERFIETGSNNMFGGGQTNLVHFGTGVRDCVGKSLADCEIFTVLATLINRYQFINPTLEPLNDIGSFGIAYQPPINNFIIKKRL.

A helical transmembrane segment spans residues 1-21; sequence MNLYISILILIISLIIFFKNN. Position 450 (Cys450) interacts with heme.

It belongs to the cytochrome P450 family. Heme serves as cofactor.

Its subcellular location is the membrane. This Dictyostelium discoideum (Social amoeba) protein is Probable cytochrome P450 513E1 (cyp513E1).